The primary structure comprises 346 residues: Magnesium-chelatase 38 kDa subunit (346 aa).

34-41 (GHRGTGKS) is an ATP binding site.

It belongs to the Mg-chelatase subunits D/I family.

The catalysed reaction is protoporphyrin IX + Mg(2+) + ATP + H2O = Mg-protoporphyrin IX + ADP + phosphate + 3 H(+). The protein operates within porphyrin-containing compound metabolism; bacteriochlorophyll biosynthesis. Its function is as follows. Involved in bacteriochlorophyll biosynthesis; introduces a magnesium ion into protoporphyrin IX to yield Mg-protoporphyrin IX. The chain is Magnesium-chelatase 38 kDa subunit (bchI) from Chlorobaculum parvum (strain DSM 263 / NCIMB 8327) (Chlorobium vibrioforme subsp. thiosulfatophilum).